Reading from the N-terminus, the 211-residue chain is Ribosomal RNA small subunit methyltransferase G (211 aa).

S-adenosyl-L-methionine-binding positions include Gly-76, Leu-81, 127 to 128 (VE), and Arg-142.

Belongs to the methyltransferase superfamily. RNA methyltransferase RsmG family.

It is found in the cytoplasm. It catalyses the reaction guanosine(527) in 16S rRNA + S-adenosyl-L-methionine = N(7)-methylguanosine(527) in 16S rRNA + S-adenosyl-L-homocysteine. Specifically methylates the N7 position of guanine in position 527 of 16S rRNA. The sequence is that of Ribosomal RNA small subunit methyltransferase G from Vibrio vulnificus (strain CMCP6).